Reading from the N-terminus, the 367-residue chain is Multifunctional tryptophan biosynthesis protein (367 aa).

The 195-residue stretch at 7-201 (NVVMIDNYDS…LNVSGGYWEE (195 aa)) folds into the Glutamine amidotransferase type-1 domain. 58 to 60 (GPG) is an L-glutamine binding site. Catalysis depends on Cys86, which acts as the Nucleophile; for GATase activity. Residues Gln90 and 136–137 (SL) contribute to the L-glutamine site. Catalysis depends on for GATase activity residues His175 and Glu177. Residues 209 to 367 (RKESILEKIY…TVLLIVKMLS (159 aa)) form an indole-3-glycerol phosphate synthase region.

In terms of assembly, tetramer of two components I and two components II.

It catalyses the reaction chorismate + L-glutamine = anthranilate + pyruvate + L-glutamate + H(+). The catalysed reaction is 1-(2-carboxyphenylamino)-1-deoxy-D-ribulose 5-phosphate + H(+) = (1S,2R)-1-C-(indol-3-yl)glycerol 3-phosphate + CO2 + H2O. It participates in amino-acid biosynthesis; L-tryptophan biosynthesis; L-tryptophan from chorismate: step 1/5. The protein operates within amino-acid biosynthesis; L-tryptophan biosynthesis; L-tryptophan from chorismate: step 4/5. This chain is Multifunctional tryptophan biosynthesis protein, found in Pichia angusta (Yeast).